The sequence spans 248 residues: Ureidoacrylate amidohydrolase RutB (248 aa).

Residue Asp41 is the Proton acceptor of the active site. The active site involves Lys150. Cys183 (nucleophile) is an active-site residue.

Belongs to the isochorismatase family. RutB subfamily.

The catalysed reaction is (Z)-3-ureidoacrylate + H2O + H(+) = (Z)-3-aminoacrylate + NH4(+) + CO2. The enzyme catalyses (Z)-3-ureidoacrylate + H2O = (Z)-3-aminoacrylate + carbamate + H(+). It carries out the reaction (Z)-2-methylureidoacrylate + H2O + H(+) = (Z)-2-methylaminoacrylate + NH4(+) + CO2. Its function is as follows. Hydrolyzes ureidoacrylate to form aminoacrylate and carbamate. The carbamate hydrolyzes spontaneously, thereby releasing one of the nitrogen atoms of the pyrimidine ring as ammonia and one of its carbon atoms as CO2. The polypeptide is Ureidoacrylate amidohydrolase RutB (Methylorubrum extorquens (strain ATCC 14718 / DSM 1338 / JCM 2805 / NCIMB 9133 / AM1) (Methylobacterium extorquens)).